The primary structure comprises 506 residues: MAVISLLQGLSVGQQIGTAAAISVFVLTSIVVYGCYLHPLSHVPGPFLAKFSPIWGMRALYRMKFNSELQALHEKYGPVVRVAPNEVSFATLEAETAIYANQEDGRFSKAGTFLTLFSDLVLNAPTLITIPDPALHKRLHKVIQQAFTPQALASQEPIQKLHIEKAIPDFDETADKGYHIDLADKLETMFWEIIGDLAFGEPLMAGKRPTYEKLKQLGKGSMPMVEALSFMLVMPGVAPTLEMARSFLSAMPMSSQLSKLVPSTKLRDCVERKDGREDFLSAIMGSEKQGLTLDADAFFSNAMGLTLAGYQTTATTLASTFYHVLRYTDAYKTLCTEIRSAFNDEAEITGERLARLPFLNACIRETLRLLPPANGKTAQRTAPSCTIADTYIPAGTIVSADLYTIQRSPKYFVDPARFHPERWLEDAEKNGFNGDNRSASRPFLIGSRACIGRHMAQQSIRLIMATLLWRYDFELLDPDGFIWERDAGSSLIYTDYKLPVHVKRFQ.

Position 450 (cysteine 450) interacts with heme.

This sequence belongs to the cytochrome P450 family. Heme serves as cofactor.

Its pathway is secondary metabolite biosynthesis; terpenoid biosynthesis. Its function is as follows. Cytochrome P450 monooxygenase; part of the gene cluster that mediates the biosynthesis of terpestacin. The bifunctional terpene synthase tpcA converts isopentenyl diphosphate (IPP) and dimethylallyl diphosphate (DMAPP) into the sesterterpene preterpestacin I. The C-terminal prenyltransferase (PT) domain of tpcA catalyzes formation of GFPP, whereas the N-terminal terpene cyclase (TC) domain catalyzes the cyclization of GFPP into preterpestacin I. The cytochrome P450 monooxygenase tpcB then hydroxylates preterpestacin I to yield 24-hydroxypreterpstacin I (renamed as preterpestacin II) whereas the cytochrome P450 monooxygenase tpcC further hydroxylates preterpestacin II to yield 16,17-dihydroxypreterpestacin II (renamed as preterpestacin III). Finally, the FAD-dependent monooxygenase tpcD converts preterpestacin III into terpestacin. The chain is Cytochrome P450 monooxygenase tpcB from Cochliobolus heterostrophus (strain C5 / ATCC 48332 / race O) (Southern corn leaf blight fungus).